The primary structure comprises 424 residues: Ribulose bisphosphate carboxylase (424 aa).

The active-site Proton acceptor is Lys-159. Position 161 (Lys-161) interacts with substrate. Mg(2+) contacts are provided by Lys-185, Asp-187, and Glu-188. Position 185 is an N6-carboxylysine (Lys-185). Catalysis depends on His-277, which acts as the Proton acceptor. Residues Arg-278, His-310, 347 to 349 (SGG), and 369 to 372 (QAGG) each bind substrate.

The protein belongs to the RuBisCO large chain family. Type III subfamily. Homodimer or homodecamer. In contrast to form I RuBisCO, the form III RuBisCO is composed solely of large subunits. Mg(2+) serves as cofactor.

It catalyses the reaction 2 (2R)-3-phosphoglycerate + 2 H(+) = D-ribulose 1,5-bisphosphate + CO2 + H2O. The catalysed reaction is D-ribulose 1,5-bisphosphate + O2 = 2-phosphoglycolate + (2R)-3-phosphoglycerate + 2 H(+). Catalyzes the addition of molecular CO(2) and H(2)O to ribulose 1,5-bisphosphate (RuBP), generating two molecules of 3-phosphoglycerate (3-PGA). Functions in an archaeal AMP degradation pathway, together with AMP phosphorylase and R15P isomerase. This chain is Ribulose bisphosphate carboxylase, found in Pyrococcus abyssi (strain GE5 / Orsay).